Reading from the N-terminus, the 211-residue chain is Large ribosomal subunit protein uL4 (211 aa).

The interval 40–87 (QQAHTRQGTASTLTRSEVRGGGRKPYKQKGTGRARQGSIRTPLRPGGG) is disordered. Polar residues predominate over residues 41-54 (QAHTRQGTASTLTR). The span at 60–71 (GGRKPYKQKGTG) shows a compositional bias: basic residues.

The protein belongs to the universal ribosomal protein uL4 family. In terms of assembly, part of the 50S ribosomal subunit.

One of the primary rRNA binding proteins, this protein initially binds near the 5'-end of the 23S rRNA. It is important during the early stages of 50S assembly. It makes multiple contacts with different domains of the 23S rRNA in the assembled 50S subunit and ribosome. Its function is as follows. Forms part of the polypeptide exit tunnel. The sequence is that of Large ribosomal subunit protein uL4 from Synechococcus sp. (strain WH7803).